The chain runs to 254 residues: Pyridoxine 5'-phosphate synthase (254 aa).

Asparagine 8 provides a ligand contact to 3-amino-2-oxopropyl phosphate. Residue 10-11 (DH) participates in 1-deoxy-D-xylulose 5-phosphate binding. Position 19 (arginine 19) interacts with 3-amino-2-oxopropyl phosphate. Histidine 44 serves as the catalytic Proton acceptor. Positions 46 and 51 each coordinate 1-deoxy-D-xylulose 5-phosphate. Catalysis depends on glutamate 74, which acts as the Proton acceptor. 1-deoxy-D-xylulose 5-phosphate is bound at residue threonine 104. The active-site Proton donor is histidine 198. 3-amino-2-oxopropyl phosphate contacts are provided by residues glycine 199 and 220-221 (GH).

It belongs to the PNP synthase family. Homooctamer; tetramer of dimers.

The protein resides in the cytoplasm. It carries out the reaction 3-amino-2-oxopropyl phosphate + 1-deoxy-D-xylulose 5-phosphate = pyridoxine 5'-phosphate + phosphate + 2 H2O + H(+). It functions in the pathway cofactor biosynthesis; pyridoxine 5'-phosphate biosynthesis; pyridoxine 5'-phosphate from D-erythrose 4-phosphate: step 5/5. Its function is as follows. Catalyzes the complicated ring closure reaction between the two acyclic compounds 1-deoxy-D-xylulose-5-phosphate (DXP) and 3-amino-2-oxopropyl phosphate (1-amino-acetone-3-phosphate or AAP) to form pyridoxine 5'-phosphate (PNP) and inorganic phosphate. The protein is Pyridoxine 5'-phosphate synthase of Caulobacter vibrioides (strain ATCC 19089 / CIP 103742 / CB 15) (Caulobacter crescentus).